A 72-amino-acid polypeptide reads, in one-letter code: Protein kish (72 aa).

The first 26 residues, methionine 1–glycine 26, serve as a signal peptide directing secretion. The Extracellular portion of the chain corresponds to serine 27–alanine 47. Residues alanine 48–tryptophan 68 form a helical membrane-spanning segment. Residues threonine 69–asparagine 72 lie on the Cytoplasmic side of the membrane.

Belongs to the KISH family.

The protein localises to the golgi apparatus membrane. Involved in the early part of the secretory pathway. The chain is Protein kish (tmem167) from Dictyostelium discoideum (Social amoeba).